Consider the following 508-residue polypeptide: ATP synthase subunit alpha, chloroplastic (508 aa).

Position 172 to 179 (172 to 179 (GDRQTGKT)) interacts with ATP.

It belongs to the ATPase alpha/beta chains family. In terms of assembly, F-type ATPases have 2 components, CF(1) - the catalytic core - and CF(0) - the membrane proton channel. CF(1) has five subunits: alpha(3), beta(3), gamma(1), delta(1), epsilon(1). CF(0) has four main subunits: a, b, b' and c.

Its subcellular location is the plastid. The protein resides in the chloroplast thylakoid membrane. It catalyses the reaction ATP + H2O + 4 H(+)(in) = ADP + phosphate + 5 H(+)(out). Its function is as follows. Produces ATP from ADP in the presence of a proton gradient across the membrane. The alpha chain is a regulatory subunit. In Psilotum nudum (Whisk fern), this protein is ATP synthase subunit alpha, chloroplastic.